The following is a 185-amino-acid chain: Hypoxanthine/guanine phosphoribosyltransferase (185 aa).

It belongs to the purine/pyrimidine phosphoribosyltransferase family. Archaeal HPRT subfamily. Homodimer.

The protein localises to the cytoplasm. It carries out the reaction IMP + diphosphate = hypoxanthine + 5-phospho-alpha-D-ribose 1-diphosphate. The enzyme catalyses GMP + diphosphate = guanine + 5-phospho-alpha-D-ribose 1-diphosphate. The protein operates within purine metabolism; IMP biosynthesis via salvage pathway; IMP from hypoxanthine: step 1/1. Catalyzes a salvage reaction resulting in the formation of IMP that is energically less costly than de novo synthesis. This chain is Hypoxanthine/guanine phosphoribosyltransferase (hpt), found in Methanococcus maripaludis (strain DSM 14266 / JCM 13030 / NBRC 101832 / S2 / LL).